The sequence spans 161 residues: Lipoprotein signal peptidase (161 aa).

3 helical membrane passes run 9 to 29, 64 to 84, and 96 to 113; these read WLWL…LVVE, WQKY…ANVL, and MAYA…IDRA. Catalysis depends on residues Asp120 and Asp138. The helical transmembrane segment at 133–153 threads the bilayer; that stretch reads VFNIADVAIVMGAGLLILETF.

This sequence belongs to the peptidase A8 family.

The protein resides in the cell inner membrane. It catalyses the reaction Release of signal peptides from bacterial membrane prolipoproteins. Hydrolyzes -Xaa-Yaa-Zaa-|-(S,diacylglyceryl)Cys-, in which Xaa is hydrophobic (preferably Leu), and Yaa (Ala or Ser) and Zaa (Gly or Ala) have small, neutral side chains.. The protein operates within protein modification; lipoprotein biosynthesis (signal peptide cleavage). In terms of biological role, this protein specifically catalyzes the removal of signal peptides from prolipoproteins. This chain is Lipoprotein signal peptidase, found in Haemophilus ducreyi (strain 35000HP / ATCC 700724).